A 191-amino-acid chain; its full sequence is UPF0149 protein VV1_1551 (191 aa).

The protein belongs to the UPF0149 family.

This chain is UPF0149 protein VV1_1551, found in Vibrio vulnificus (strain CMCP6).